The chain runs to 181 residues: Peptide deformylase (181 aa).

Cys104 and His146 together coordinate Fe cation. Glu147 is a catalytic residue. His150 contributes to the Fe cation binding site.

Belongs to the polypeptide deformylase family. Requires Fe(2+) as cofactor.

The enzyme catalyses N-terminal N-formyl-L-methionyl-[peptide] + H2O = N-terminal L-methionyl-[peptide] + formate. Functionally, removes the formyl group from the N-terminal Met of newly synthesized proteins. Requires at least a dipeptide for an efficient rate of reaction. N-terminal L-methionine is a prerequisite for activity but the enzyme has broad specificity at other positions. This Helicobacter hepaticus (strain ATCC 51449 / 3B1) protein is Peptide deformylase.